The following is a 561-amino-acid chain: Liver carboxylesterase 1F (561 aa).

Residues 1-18 form the signal peptide; that stretch reads MCLSFLFLVSLATCVVYG. N79 carries an N-linked (GlcNAc...) asparagine glycan. C87 and C116 are joined by a disulfide. Catalysis depends on S221, which acts as the Acyl-ester intermediate. A disulfide bridge links C273 with C284. Residues E353 and H466 each act as charge relay system in the active site. The Prevents secretion from ER signature appears at 558–561; the sequence is HNEL.

It belongs to the type-B carboxylesterase/lipase family. Expressed in liver and kidney.

The protein localises to the lipid droplet. The protein resides in the cytoplasm. It localises to the cytosol. Its subcellular location is the endoplasmic reticulum. It is found in the microsome. The enzyme catalyses a carboxylic ester + H2O = an alcohol + a carboxylate + H(+). It carries out the reaction all-trans-retinyl hexadecanoate + H2O = all-trans-retinol + hexadecanoate + H(+). Functionally, involved in the detoxification of xenobiotics and in the activation of ester and amide prodrugs. Hydrolyzes retinyl esters. Hydrolyzes p-nitrophenyl butyrate (PNPB), triacylglycerol and monoacylglycerol. Shows higher activity against PNPB, a short-chain fatty acid ester, than against triolein, a long-chain fatty acid ester. Shows no detectable activity against diacylglycerol, cholesterol ester or phospholipids. May play a role in adipocyte lipolysis. The protein is Liver carboxylesterase 1F of Rattus norvegicus (Rat).